The following is a 1004-amino-acid chain: Sal-like protein 2 (1004 aa).

5 disordered regions span residues 1-33 (MSRRKQRRPQQLISDCEGPSASENGDASEEDHP), 51-122 (AHQN…EESS), 137-177 (GGGL…SGHL), 220-270 (PASP…EPPK), and 285-307 (PFSVGGVGRSHKPTPAPSPALPG). The segment at 34–56 (QVCAKCCAQFSDPTEFLAHQNSC) adopts a C2H2-type 1; atypical zinc-finger fold. A compositionally biased stretch (low complexity) spans 71–81 (NPSNSSASSAP). Residues 83–98 (PEGHSRSQVMDTEHSN) are compositionally biased toward basic and acidic residues. The span at 99–110 (PPDSGSSGAPDP) shows a compositional bias: low complexity. Over residues 151–171 (PLPPESTPAPPPPPPPPPPPG) the composition is skewed to pro residues. A Phosphoserine modification is found at S243. 5 C2H2-type zinc fingers span residues 372–394 (HKCRFCAKVFGSDSALQIHLRSH), 400–422 (YKCNVCGNRFTTRGNLKVHFHRH), 629–651 (NQCVICLRVLSCPRALRLHYGQH), 657–679 (FKCKVCGRAFSTRGNLRAHFVGH), and 689–711 (NSCPICQKKFTNAVTLQQHVRMH). The disordered stretch occupies residues 712–910 (LGGQIPNGGS…PGESSGRKAC (199 aa)). Residues 731–742 (QENSSEQSTASG) are compositionally biased toward polar residues. Acidic residues predominate over residues 756-779 (PEEEMSEEEEEDEEEEEDVTDEDS). 3 positions are modified to phosphoserine: S794, S799, and S803. Residues 800–809 (EEVSGAEEEV) show a composition bias toward acidic residues. The segment covering 810–819 (ATSVAAPTTV) has biased composition (low complexity). Positions 820–829 (KEMDSNEKAP) are enriched in basic and acidic residues. Over residues 832–841 (TLPPPPPPPD) the composition is skewed to pro residues. Over residues 896–910 (AMKKDPGESSGRKAC) the composition is skewed to basic and acidic residues. Residue K908 forms a Glycyl lysine isopeptide (Lys-Gly) (interchain with G-Cter in ubiquitin) linkage. 2 C2H2-type zinc fingers span residues 908–930 (KACEVCGQSFPTQTALEEHQKTH) and 937–961 (FTCVFCRQGFLDRATLKKHMLLAHH).

The protein belongs to the sal C2H2-type zinc-finger protein family. In terms of tissue distribution, expressed throughout embryonic development. In adult predominantly in brain.

The protein resides in the nucleus. Functionally, probable transcription factor that plays a role in eye development before, during, and after optic fissure closure. The polypeptide is Sal-like protein 2 (Sall2) (Mus musculus (Mouse)).